A 2182-amino-acid polypeptide reads, in one-letter code: Autophagy-related protein 2 (2182 aa).

Disordered stretches follow at residues 291–375, 392–426, 523–630, 663–682, 736–758, and 793–816; these read SPSL…PLAD, EQDY…ATPR, YTHE…STTL, DIDP…VATP, GAFS…SSVE, and DKKP…SKET. Polar residues-rich tracts occupy residues 303 to 313 and 322 to 331; these read NPPSRQATELS and VSSSQASIRS. Basic and acidic residues predominate over residues 332-347; sequence NEPESASHHSLPENDH. 2 stretches are compositionally biased toward acidic residues: residues 528 to 540 and 613 to 624; these read AENE…EQTT and WDDDYDDPEEEP. The span at 745-758 shows a compositional bias: polar residues; sequence HAQQRSSQGTSSVE. Over residues 793 to 813 the composition is skewed to basic and acidic residues; that stretch reads DKKPSPAEGSKQDTASKDAPS.

The protein belongs to the ATG2 family. Interacts with ATG18.

The protein localises to the preautophagosomal structure membrane. It localises to the endoplasmic reticulum membrane. It carries out the reaction a 1,2-diacyl-sn-glycero-3-phosphocholine(in) = a 1,2-diacyl-sn-glycero-3-phosphocholine(out). The enzyme catalyses a 1,2-diacyl-sn-glycero-3-phospho-L-serine(in) = a 1,2-diacyl-sn-glycero-3-phospho-L-serine(out). The catalysed reaction is a 1,2-diacyl-sn-glycero-3-phosphoethanolamine(in) = a 1,2-diacyl-sn-glycero-3-phosphoethanolamine(out). Its function is as follows. Lipid transfer protein required for autophagosome completion and peroxisome degradation and peroxisome degradation. Tethers the edge of the isolation membrane (IM) to the endoplasmic reticulum (ER) and mediates direct lipid transfer from ER to IM for IM expansion. ATG2 binds to the ER exit site (ERES), which is the membrane source for autophagosome formation, using basic residues in its N-terminal region (NR) and to the expanding edge of the IM through its C-terminal region. The latter binding is assisted by an ATG18-PtdIns3P interaction. ATG2 then extracts phospholipids from the membrane source using its NR and transfers them to ATG9 to the IM through its predicted beta-sheet-rich structure for membrane expansion. Autophagy is required for proper vegetative growth, asexual/sexual reproduction, and full virulence. Autophagy is particularly involved in the biosynthesis of deoxynivalenol (DON), an important virulence determinant. The chain is Autophagy-related protein 2 from Gibberella zeae (strain ATCC MYA-4620 / CBS 123657 / FGSC 9075 / NRRL 31084 / PH-1) (Wheat head blight fungus).